Reading from the N-terminus, the 441-residue chain is Protein FAM83A (441 aa).

2 disordered regions span residues 81–108 (SNDN…MNSD) and 312–368 (GMSI…SPLQ). Residues 314–327 (SIMSDSNPESINTT) are compositionally biased toward polar residues. Low complexity predominate over residues 328–354 (SEPFSSISTASISNDSQRPKSPVSTTP).

This sequence belongs to the FAM83 family.

It localises to the cytoplasm. May function in the epidermal growth factor receptor/EGFR signaling pathway. This is Protein FAM83A from Xenopus tropicalis (Western clawed frog).